A 251-amino-acid polypeptide reads, in one-letter code: CDP-diacylglycerol pyrophosphatase (251 aa).

The chain crosses the membrane as a helical span at residues 4 to 24; that stretch reads AGLLFLVMIVIAVVAAGIGYW.

Belongs to the Cdh family.

It is found in the cell inner membrane. The enzyme catalyses a CDP-1,2-diacyl-sn-glycerol + H2O = a 1,2-diacyl-sn-glycero-3-phosphate + CMP + 2 H(+). It functions in the pathway phospholipid metabolism; CDP-diacylglycerol degradation; phosphatidate from CDP-diacylglycerol: step 1/1. This is CDP-diacylglycerol pyrophosphatase from Escherichia coli O7:K1 (strain IAI39 / ExPEC).